Consider the following 196-residue polypeptide: Transmembrane protein 126A (196 aa).

Topologically, residues 1-34 (MENHKSNNTKENITIVDISRKINQLPEAERNLLE) are mitochondrial matrix. Residues 35–55 (HGSVYVGLNAALCGLIANSLF) traverse the membrane as a helical segment. The Mitochondrial intermembrane portion of the chain corresponds to 56-57 (RR). The helical transmembrane segment at 58–78 (ILNVTKARIAAGLPMAWIPFL) threads the bilayer. Topologically, residues 79 to 107 (TTDITYRCFVSFPLNTGDLDCETCTITRS) are mitochondrial matrix. Residues 108–128 (GLIGLVIGGLYPVFLAIPVNG) traverse the membrane as a helical segment. Residues 129-159 (GLAARYQSALLPHKGNILSYWIRTSKPVFRK) are Mitochondrial intermembrane-facing. Residues 160–176 (MLFPIMLQTMFSAYLGS) traverse the membrane as a helical segment. The Mitochondrial matrix portion of the chain corresponds to 177 to 196 (EQYKLLIKALQLSEPGKEIH).

It belongs to the TMEM126 family. In terms of assembly, interacts with OXA1L; promoting cotranslational quality control in mitochondria.

The protein resides in the mitochondrion inner membrane. Its function is as follows. Protein required for the cotranslational protein quality control in the inner membrane of the mitochondria. Associates with newly synthesized polypeptides and may act as a chaperone that cooperates with OXA1L for the insertion of newly synthesized mitochondrial proteins into the inner membrane. Required for the assembly of the ND4 module of mitochondrial complex I. This is Transmembrane protein 126A (TMEM126A) from Pongo abelii (Sumatran orangutan).